The sequence spans 244 residues: MKLLKNKKVTFVALLAILAVLSTQSVSAMHIMEGYLPLFWCIFWFAVFLPFFVVGLMRIKKIVAEDPNSKTMLALSGAFIFILSSLKIPSVTGSSSHPTGVGLGTAMFGPSVISVLGTICLLFQALLLAHGGLTTLGANAFSMAVVGPFVGYFVYKFAKSIKLSTPVSIFICAVIADLATYATTSIQLGLVFPDANSGFVGSALKFMGVFLTTQIPIAIVEGLLTVVLYNLISENVKERAGLFK.

The signal sequence occupies residues 1-28 (MKLLKNKKVTFVALLAILAVLSTQSVSA). 6 helical membrane passes run 36–56 (LPLF…VVGL), 71–91 (TMLA…IPSV), 108–128 (FGPS…ALLL), 135–155 (TLGA…YFVY), 166–186 (PVSI…TTSI), and 208–228 (GVFL…TVVL).

The protein belongs to the CbiM family. In terms of assembly, forms an energy-coupling factor (ECF) transporter complex composed of an ATP-binding protein (A component, CbiO), a transmembrane protein (T component, CbiQ) and 2 possible substrate-capture proteins (S components, CbiM and CbiN) of unknown stoichimetry.

Its subcellular location is the cell membrane. It participates in cofactor biosynthesis; adenosylcobalamin biosynthesis. In terms of biological role, part of the energy-coupling factor (ECF) transporter complex CbiMNOQ involved in cobalt import. This chain is Cobalt transport protein CbiM, found in Streptococcus sanguinis (strain SK36).